Here is a 595-residue protein sequence, read N- to C-terminus: Glutamyl-tRNA(Gln) amidotransferase subunit B, mitochondrial (595 aa).

The transit peptide at 1–72 (MPRLWYSRYL…RAKSQSRNGR (72 aa)) directs the protein to the mitochondrion.

This sequence belongs to the GatB/GatE family. GatB subfamily. In terms of assembly, subunit of the heterotrimeric GatCAB amidotransferase (AdT) complex, composed of A, B and C subunits.

It is found in the mitochondrion. The enzyme catalyses L-glutamyl-tRNA(Gln) + L-glutamine + ATP + H2O = L-glutaminyl-tRNA(Gln) + L-glutamate + ADP + phosphate + H(+). In terms of biological role, allows the formation of correctly charged Gln-tRNA(Gln) through the transamidation of misacylated Glu-tRNA(Gln) in the mitochondria. The reaction takes place in the presence of glutamine and ATP through an activated gamma-phospho-Glu-tRNA(Gln). This chain is Glutamyl-tRNA(Gln) amidotransferase subunit B, mitochondrial, found in Talaromyces marneffei (strain ATCC 18224 / CBS 334.59 / QM 7333) (Penicillium marneffei).